Consider the following 105-residue polypeptide: Antitoxin YfjZ (105 aa).

Belongs to the CbeA/YafW/YfjZ antitoxin family.

Its function is as follows. Antitoxin component of a type IV toxin-antitoxin (TA) system. Antitoxin that counteracts the effect of cognate toxin YpjF. Also counteracts the effect of non-cognate toxins CbtA and YfkI. The chain is Antitoxin YfjZ (yfjZ) from Escherichia coli (strain K12).